The chain runs to 80 residues: Cell division protein ZapB (80 aa).

The stretch at 3 to 80 (FEVLEQLEAK…NLLGKMDDVE (78 aa)) forms a coiled coil.

Belongs to the ZapB family. In terms of assembly, homodimer. The ends of the coiled-coil dimer bind to each other, forming polymers. Interacts with FtsZ.

It is found in the cytoplasm. Non-essential, abundant cell division factor that is required for proper Z-ring formation. It is recruited early to the divisome by direct interaction with FtsZ, stimulating Z-ring assembly and thereby promoting cell division earlier in the cell cycle. Its recruitment to the Z-ring requires functional FtsA or ZipA. This chain is Cell division protein ZapB, found in Vibrio atlanticus (strain LGP32) (Vibrio splendidus (strain Mel32)).